The sequence spans 107 residues: Heme-degrading monooxygenase (107 aa).

In terms of domain architecture, ABM spans valine 2–phenylalanine 93. Asparagine 6 contacts Fe cation. A heme-binding site is contributed by histidine 76.

Belongs to the antibiotic biosynthesis monooxygenase family. Heme-degrading monooxygenase IsdG subfamily. As to quaternary structure, homodimer.

The protein resides in the cytoplasm. It catalyses the reaction heme b + 3 reduced [NADPH--hemoprotein reductase] + 3 O2 = biliverdin IXalpha + CO + Fe(2+) + 3 oxidized [NADPH--hemoprotein reductase] + 3 H2O + H(+). Allows bacterial pathogens to use the host heme as an iron source. Catalyzes the oxidative degradation of the heme macrocyclic porphyrin ring to the biliverdin in the presence of a suitable electron donor such as ascorbate or NADPH--cytochrome P450 reductase, with subsequent release of free iron. The sequence is that of Heme-degrading monooxygenase from Shouchella clausii (strain KSM-K16) (Alkalihalobacillus clausii).